The following is a 268-amino-acid chain: Chymotrypsin-C (268 aa).

A signal peptide spans 1–16; sequence MLGITVLAAILACASS. A propeptide spans 17 to 29 (activation peptide); that stretch reads CGDPTFPPNLSAR. 5 cysteine pairs are disulfide-bonded: Cys-17–Cys-141, Cys-59–Cys-75, Cys-155–Cys-222, Cys-186–Cys-202, and Cys-212–Cys-243. A glycan (N-linked (GlcNAc...) asparagine) is linked at Asn-25. Positions 30-267 constitute a Peptidase S1 domain; it reads VVGGEDAVPN…YIDWIKEKIQ (238 aa). Residue His-74 is the Charge relay system of the active site. Asn-79 and Asn-90 each carry an N-linked (GlcNAc...) asparagine glycan. Asp-121 serves as the catalytic Charge relay system. N-linked (GlcNAc...) asparagine glycosylation occurs at Asn-182. The Charge relay system role is filled by Ser-216.

This sequence belongs to the peptidase S1 family. Elastase subfamily.

It carries out the reaction Preferential cleavage: Leu-|-Xaa, Tyr-|-Xaa, Phe-|-Xaa, Met-|-Xaa, Trp-|-Xaa, Gln-|-Xaa, Asn-|-Xaa.. Functionally, regulates activation and degradation of trypsinogens and procarboxypeptidases by targeting specific cleavage sites within their zymogen precursors. Has chymotrypsin-type protease activity and hypocalcemic activity. Cleaves TRY4 and TRY5 and thereby inhibits their autoactivation. The polypeptide is Chymotrypsin-C (Ctrc) (Mus musculus (Mouse)).